A 375-amino-acid chain; its full sequence is ATP-sensitive inward rectifier potassium channel 15 (375 aa).

Topologically, residues 1–60 are cytoplasmic; the sequence is MDAIHIGMSSTPLVKHTAGAGLKANRPRVMSKSGHSNVRIDKVDGIYLLYLQDLWTTVID. The helical transmembrane segment at 61–87 threads the bilayer; that stretch reads MKWRYKLTLFAATFVMTWFLFGVIYYA. Over 88-113 the chain is Extracellular; sequence IAFIHGDLEPGEPISNHTPCIMKVDS. Positions 114–130 form an intramembrane region, helical; Pore-forming; sequence LTGAFLFSLESQTTIGY. The short motif at 127-132 is the Selectivity filter element; sequence TIGYGV. Residues 131-139 lie on the Extracellular side of the membrane; it reads GVRSITEEC. Residues 140–165 traverse the membrane as a helical segment; the sequence is PHAIFLLVAQLVITTLIEIFITGTFL. At 166–375 the chain is on the cytoplasmic side; sequence AKIARPKKRA…RTLLLQQSNV (210 aa).

The protein belongs to the inward rectifier-type potassium channel (TC 1.A.2.1) family. KCNJ15 subfamily. Can form heteromultimeric channels with Kir5.1/KCNJ16. Interacts with PATJ.

The protein resides in the membrane. Its subcellular location is the cell membrane. It catalyses the reaction K(+)(in) = K(+)(out). Its activity is regulated as follows. Channel activity is regulated by variations of cytosolic pH; reversibly inhibited by acidic pH values. Inhibited by Ba(2+) and Cs(+) in a voltage-dependent manner. Inward rectifier potassium channels are characterized by a greater tendency to allow potassium to flow into the cell rather than out of it. Their voltage dependence is regulated by the concentration of extracellular potassium; as external potassium is raised, the voltage range of the channel opening shifts to more positive voltages. The inward rectification is mainly due to the blockage of outward current by internal magnesium. This is ATP-sensitive inward rectifier potassium channel 15 (KCNJ15) from Homo sapiens (Human).